A 1499-amino-acid polypeptide reads, in one-letter code: B-cell CLL/lymphoma 9-like protein (1499 aa).

2 disordered regions span residues 1 to 238 (MRIL…PPSQ) and 271 to 500 (VPRA…MGQQ). The segment covering 20-37 (GSPPLSPRGHCPPAPAKP) has biased composition (pro residues). S21 and S25 each carry phosphoserine. N6-acetyllysine is present on K36. Composition is skewed to polar residues over residues 45-70 (TNHG…TCNV) and 85-96 (NQISPSNSSLKN). S88 is subject to Phosphoserine. N6-acetyllysine occurs at positions 108 and 110. Basic and acidic residues-rich tracts occupy residues 114 to 126 (DRSV…EQRE) and 134 to 153 (SEAK…ERKQ). S116 and S118 each carry phosphoserine. K137 carries the N6-acetyllysine modification. The span at 193-205 (PGQTTQLPLSESS) shows a compositional bias: polar residues. A compositionally biased stretch (gly residues) spans 222-232 (PGGGGGGGGVP). Composition is skewed to pro residues over residues 281–291 (KVPPTPEPLPL) and 301–325 (SQPP…PPEG). The tract at residues 304 to 533 (PPLPPPPPPA…QEEYYEEKRR (230 aa)) is necessary for interaction with CTNNB1. Composition is skewed to low complexity over residues 351-363 (THPN…TANN) and 370-387 (DPSS…AAPG). The span at 399 to 421 (LSKEQLEHRERSLQTLRDIERLL) shows a compositional bias: basic and acidic residues. S424 is modified (phosphoserine). Pro residues predominate over residues 445–458 (AQAPPPPQQPPTAP). T514 carries the phosphothreonine modification. Asymmetric dimethylarginine is present on R680. Phosphoserine occurs at positions 750, 813, 915, 926, 938, 942, 947, 975, 987, 991, 997, 1004, 1010, and 1017. Disordered regions lie at residues 888–1084 (SHMP…QNPL) and 1116–1201 (ELLP…PQNS). Polar residues predominate over residues 935–960 (PTLSQVHSPLVTSPSANLKSPQTPSQ). Positions 978 to 996 (VLGSSLSVRSPTGSPSRLK) are enriched in polar residues. Polar residues-rich tracts occupy residues 1019-1041 (GVSQ…NMEQ) and 1069-1084 (LPFT…QNPL). Composition is skewed to pro residues over residues 1122 to 1132 (PLLPPPPPPQG) and 1168 to 1179 (HEPPPAMLPSPT). K1344 participates in a covalent cross-link: Glycyl lysine isopeptide (Lys-Gly) (interchain with G-Cter in SUMO2).

This sequence belongs to the BCL9 family. As to quaternary structure, found in a complex with CDC73; CTNNB1 and PYGO1. Interacts with CTNNB1. In terms of tissue distribution, expressed in breast, ductal and invasive ductal carcinomas of the breast, sporadic colorectal adenomas and carcinomas (at protein level). Expressed in fetal brain. Expressed in lung, amygdala, eye, prostate, pancreatic and prostate cancers, head and neck tumors and embryonal tumor.

It localises to the nucleus. Transcriptional regulator that acts as an activator. Promotes beta-catenin transcriptional activity. Plays a role in tumorigenesis. Enhances the neoplastic transforming activity of CTNNB1. This Homo sapiens (Human) protein is B-cell CLL/lymphoma 9-like protein (BCL9L).